We begin with the raw amino-acid sequence, 148 residues long: 3-dehydroquinate dehydratase (148 aa).

Tyr23 serves as the catalytic Proton acceptor. Residues Asn75, His81, and Asp88 each contribute to the substrate site. Residue His101 is the Proton donor of the active site. Substrate-binding positions include Leu102 to Ser103 and Arg112.

Belongs to the type-II 3-dehydroquinase family. Homododecamer.

It carries out the reaction 3-dehydroquinate = 3-dehydroshikimate + H2O. It participates in metabolic intermediate biosynthesis; chorismate biosynthesis; chorismate from D-erythrose 4-phosphate and phosphoenolpyruvate: step 3/7. Functionally, catalyzes a trans-dehydration via an enolate intermediate. The chain is 3-dehydroquinate dehydratase from Xanthomonas campestris pv. campestris (strain 8004).